Here is a 663-residue protein sequence, read N- to C-terminus: UvrABC system protein B (663 aa).

Residues 1–10 (MIDKRDDKPF) show a composition bias toward basic and acidic residues. The disordered stretch occupies residues 1–23 (MIDKRDDKPFKLKSKYKPSGDQP). Positions 31–271 (DNIEGGEKAQ…EQSIAKIQAE (241 aa)) constitute a Helicase ATP-binding domain. Residue 44-51 (GATGTGKT) coordinates ATP. Positions 97 to 120 (YYDYYQPEAYVPSSDTYIEKDSSV) match the Beta-hairpin motif. One can recognise a Helicase C-terminal domain in the interval 435-601 (QMDDLLGEIN…TIKKDIRGLI (167 aa)). Positions 627–662 (KEAINALQKQMQEAAELLDFELAAQMRDLILELKLM) constitute a UVR domain.

Belongs to the UvrB family. Forms a heterotetramer with UvrA during the search for lesions. Interacts with UvrC in an incision complex.

The protein localises to the cytoplasm. Functionally, the UvrABC repair system catalyzes the recognition and processing of DNA lesions. A damage recognition complex composed of 2 UvrA and 2 UvrB subunits scans DNA for abnormalities. Upon binding of the UvrA(2)B(2) complex to a putative damaged site, the DNA wraps around one UvrB monomer. DNA wrap is dependent on ATP binding by UvrB and probably causes local melting of the DNA helix, facilitating insertion of UvrB beta-hairpin between the DNA strands. Then UvrB probes one DNA strand for the presence of a lesion. If a lesion is found the UvrA subunits dissociate and the UvrB-DNA preincision complex is formed. This complex is subsequently bound by UvrC and the second UvrB is released. If no lesion is found, the DNA wraps around the other UvrB subunit that will check the other stand for damage. This is UvrABC system protein B from Streptococcus pyogenes serotype M2 (strain MGAS10270).